The chain runs to 365 residues: P43 5S RNA-binding protein (365 aa).

C2H2-type zinc fingers lie at residues 15-39 (LRCP…MAGH), 45-69 (WKCG…VKRH), 75-100 (LSCP…LYKH), 106-130 (LKCF…LSVH), 136-160 (SVCD…QKRH), 163-187 (YRCS…VKKH), 191-213 (LQCA…KATH), 220-245 (LPCP…RKLH), and 251-275 (HRCP…LVVH).

The 42S RNP particle comprises four subunits each of which contains one molecule of 5S RNA, three molecules of tRNA, two molecules of p50 (EF1-alpha) and one molecule of the 5S RNA binding protein 43.

Its function is as follows. p43 is a 5S RNA binding protein which is a major constituent of oocytes and comprises part of a 42S ribonucleoprotein storage particle. The chain is P43 5S RNA-binding protein from Xenopus laevis (African clawed frog).